Consider the following 207-residue polypeptide: MAQGTLYIVSAPSGAGKSSLIQALLKTQPLYDTQVSVSHTTRAPRPGEVHGEHYFFVNHDEFKTMIGREAFLEHAEVFGNYYGTSRETTEQVLATGVDVFLDIDWQGAQQIREKMPQARSIFILPPSKIELDRRLRGRGQDSEEVIAKRMAQAVAEMSHYAEYDYLIVNDDFDTALSDLKTIIRAERLRMSRQKQRHDALISKLLAD.

Residues 4-184 (GTLYIVSAPS…ALSDLKTIIR (181 aa)) enclose the Guanylate kinase-like domain. 11–18 (APSGAGKS) serves as a coordination point for ATP.

It belongs to the guanylate kinase family.

It is found in the cytoplasm. It carries out the reaction GMP + ATP = GDP + ADP. The enzyme catalyses dZMP + ATP = dZDP + ADP. Its pathway is purine metabolism. In terms of biological role, essential for recycling GMP and indirectly, cGMP. Its function is as follows. (Microbial infection) Catalyzes the phosphorylation of dZMP to dZDP, when the bacterium is infected by a phage that produces the substrate for the synthesis of dZTP (2- amino-2'-deoxyadenosine 5'-triphosphate), which is then used by the phage as a DNA polymerase substrate. The protein is Guanylate kinase of Salmonella choleraesuis (strain SC-B67).